The primary structure comprises 2324 residues: Serine/threonine-protein kinase MEC1 (2324 aa).

One can recognise an FAT domain in the interval 1349 to 1901 (VLAQKSLETN…LWYITVLLNS (553 aa)). The PI3K/PI4K catalytic domain occupies 2005–2308 (FTPHYKVYSS…QVDTVVQQAS (304 aa)). Positions 2011–2017 (VYSSLKK) are G-loop. A catalytic loop region spans residues 2177 to 2185 (GLGDRHLEN). Residues 2197–2221 (HVDFDCLFEKGKTLPVPEIVPFRLT) are activation loop. The FATC domain occupies 2292 to 2324 (LPLSVPGQVDTVVQQASSDENLAQMYIGWLPFW).

This sequence belongs to the PI3/PI4-kinase family. ATM subfamily.

It localises to the nucleus. It catalyses the reaction L-seryl-[protein] + ATP = O-phospho-L-seryl-[protein] + ADP + H(+). The catalysed reaction is L-threonyl-[protein] + ATP = O-phospho-L-threonyl-[protein] + ADP + H(+). Serine/threonine protein kinase which activates checkpoint signaling upon genotoxic stresses such as ionizing radiation (IR), ultraviolet light (UV), or DNA replication stalling, thereby acting as a DNA damage sensor. Recognizes the substrate consensus sequence [ST]-Q. Recruited to DNA lesions in order to initiate the DNA repair by homologous recombination. Phosphorylates histone H2A to form H2AS128ph (gamma-H2A) at sites of DNA damage, also involved in the regulation of DNA damage response mechanism. Required for cell growth and meiotic recombination. The chain is Serine/threonine-protein kinase MEC1 (MEC1) from Eremothecium gossypii (strain ATCC 10895 / CBS 109.51 / FGSC 9923 / NRRL Y-1056) (Yeast).